We begin with the raw amino-acid sequence, 447 residues long: Argininosuccinate synthase (447 aa).

ATP-binding positions include 17–25 (AFSGGLDTS) and Ala43. Tyr99 lines the L-citrulline pocket. 2 residues coordinate ATP: Gly129 and Thr131. L-aspartate-binding residues include Thr131, Asn135, and Asp136. L-citrulline is bound at residue Asn135. Asp136 contributes to the ATP binding site. Residues Arg139 and Ser192 each contribute to the L-citrulline site. An ATP-binding site is contributed by Asp194. L-citrulline is bound by residues Thr201, Glu203, and Glu280.

This sequence belongs to the argininosuccinate synthase family. Type 2 subfamily. As to quaternary structure, homotetramer.

It localises to the cytoplasm. It catalyses the reaction L-citrulline + L-aspartate + ATP = 2-(N(omega)-L-arginino)succinate + AMP + diphosphate + H(+). It functions in the pathway amino-acid biosynthesis; L-arginine biosynthesis; L-arginine from L-ornithine and carbamoyl phosphate: step 2/3. This is Argininosuccinate synthase from Salmonella newport (strain SL254).